Reading from the N-terminus, the 793-residue chain is Phenylalanine--tRNA ligase beta subunit (793 aa).

The 110-residue stretch at Ala-39 to His-148 folds into the tRNA-binding domain. Residues Pro-401–Ser-476 enclose the B5 domain. Residues Asp-454, Asp-460, Glu-463, and Glu-464 each coordinate Mg(2+). One can recognise an FDX-ACB domain in the interval Ser-699–Arg-792.

It belongs to the phenylalanyl-tRNA synthetase beta subunit family. Type 1 subfamily. As to quaternary structure, tetramer of two alpha and two beta subunits. The cofactor is Mg(2+).

The protein resides in the cytoplasm. It catalyses the reaction tRNA(Phe) + L-phenylalanine + ATP = L-phenylalanyl-tRNA(Phe) + AMP + diphosphate + H(+). The chain is Phenylalanine--tRNA ligase beta subunit from Nitrosococcus oceani (strain ATCC 19707 / BCRC 17464 / JCM 30415 / NCIMB 11848 / C-107).